The following is a 415-amino-acid chain: MAIKKRSATVVHGASGAAAAVKNPQASKSSFWGELPQHVMSGISRMVPTLIMGGVILAFSQLIAYSWLKIPADIGIMDALNSGKFSGFDLSLLKFAWLSQSFGGVLFGFAIPMFAAFVANSIGGKLAFPAGFIGGLMSTQPTQLLNFDPSTMQWATSSPVPSTFIGALIISIVAGYLVKWMNQKIQLPDFLLAFKTTFLLPILSAIFVMLAMYYVITPFGGWINGGIRTVLTAAGEKGALMYAMGIAAATAIDLGGPINKAAGFVAFSFTTDHVLPVTARSIAIVIPPIGLGLATIIDRRLTGKRLFNAQLYPQGKTAMFLAFMGISEGAIPFALESPITAIPSYMVGAIVGSTAAVWLGAVQWFPESAIWAWPLVTNLGVYMAGIALGAIITALMVVFLRLMMFRKGKLLIESL.

Topologically, residues 1–46 are cytoplasmic; the sequence is MAIKKRSATVVHGASGAAAAVKNPQASKSSFWGELPQHVMSGISRM. One can recognise a PTS EIIC type-2 domain in the interval 35–415; the sequence is LPQHVMSGIS…RKGKLLIESL (381 aa). The helical transmembrane segment at 47–67 threads the bilayer; sequence VPTLIMGGVILAFSQLIAYSW. Residues 68 to 101 are Periplasmic-facing; the sequence is LKIPADIGIMDALNSGKFSGFDLSLLKFAWLSQS. A helical membrane pass occupies residues 102–122; that stretch reads FGGVLFGFAIPMFAAFVANSI. At 123–126 the chain is on the cytoplasmic side; that stretch reads GGKL. Residues 127–147 form a helical membrane-spanning segment; that stretch reads AFPAGFIGGLMSTQPTQLLNF. Residues 148 to 157 are Periplasmic-facing; sequence DPSTMQWATS. Residues 158–178 traverse the membrane as a helical segment; sequence SPVPSTFIGALIISIVAGYLV. Residues 179-197 are Cytoplasmic-facing; that stretch reads KWMNQKIQLPDFLLAFKTT. The chain crosses the membrane as a helical span at residues 198–218; the sequence is FLLPILSAIFVMLAMYYVITP. Residues 219–237 are Periplasmic-facing; it reads FGGWINGGIRTVLTAAGEK. Residues 238–258 form a helical membrane-spanning segment; that stretch reads GALMYAMGIAAATAIDLGGPI. Over 259 to 276 the chain is Cytoplasmic; sequence NKAAGFVAFSFTTDHVLP. The chain crosses the membrane as a helical span at residues 277–297; it reads VTARSIAIVIPPIGLGLATII. The Periplasmic segment spans residues 298–318; the sequence is DRRLTGKRLFNAQLYPQGKTA. Residues 319-339 traverse the membrane as a helical segment; the sequence is MFLAFMGISEGAIPFALESPI. Residues 340–341 lie on the Cytoplasmic side of the membrane; that stretch reads TA. The helical transmembrane segment at 342–362 threads the bilayer; that stretch reads IPSYMVGAIVGSTAAVWLGAV. The Periplasmic portion of the chain corresponds to 363–378; that stretch reads QWFPESAIWAWPLVTN. A helical transmembrane segment spans residues 379 to 399; it reads LGVYMAGIALGAIITALMVVF. The Cytoplasmic segment spans residues 400-415; the sequence is LRLMMFRKGKLLIESL.

It localises to the cell inner membrane. Its function is as follows. The phosphoenolpyruvate-dependent sugar phosphotransferase system (PTS), a major carbohydrate active -transport system, catalyzes the phosphorylation of incoming sugar substrates concomitant with their translocation across the cell membrane. The polypeptide is Fructose-like permease IIC component (fryC) (Escherichia coli O6:H1 (strain CFT073 / ATCC 700928 / UPEC)).